Here is a 278-residue protein sequence, read N- to C-terminus: Protein U52 (278 aa).

Residues 1–18 show a composition bias toward polar residues; the sequence is MTRVSSVSASCTTTNPPK. Residues 1–25 are disordered; it reads MTRVSSVSASCTTTNPPKNTREDMS.

It belongs to the herpesviridae UL79 family.

The polypeptide is Protein U52 (Elephas maximus (Indian elephant)).